Here is a 468-residue protein sequence, read N- to C-terminus: Mannan endo-1,4-beta-mannosidase 3 (468 aa).

Positions 1 to 23 (MTVRPRPAAAAIIIAAVFGAAAA) are cleaved as a signal peptide. Tryptophan 86 provides a ligand contact to substrate. An N-linked (GlcNAc...) asparagine glycan is attached at asparagine 152. Substrate is bound at residue asparagine 201. Glutamate 202 (proton donor) is an active-site residue. Tyrosine 281 lines the substrate pocket. Asparagine 300 is a glycosylation site (N-linked (GlcNAc...) asparagine). Residue glutamate 321 is the Nucleophile of the active site. N-linked (GlcNAc...) asparagine glycosylation is present at asparagine 333. Residues tryptophan 364 and aspartate 371 each coordinate substrate. Residues 415 to 436 (LRRRRRRPASSHRKTRLGSGGD) form a disordered region. The segment covering 416 to 430 (RRRRRRPASSHRKTR) has biased composition (basic residues).

This sequence belongs to the glycosyl hydrolase 5 (cellulase A) family. In terms of tissue distribution, expressed in seeds.

The protein localises to the secreted. The catalysed reaction is Random hydrolysis of (1-&gt;4)-beta-D-mannosidic linkages in mannans, galactomannans and glucomannans.. The protein is Mannan endo-1,4-beta-mannosidase 3 (MAN3) of Oryza sativa subsp. japonica (Rice).